The primary structure comprises 153 residues: UPF0251 protein Daud_0090 (153 aa).

Positions 129–138 are enriched in basic and acidic residues; it reads ELMTRPERCS. A disordered region spans residues 129–153; the sequence is ELMTRPERCSRPKRGAGKYRVPKKR. Basic residues predominate over residues 139–153; the sequence is RPKRGAGKYRVPKKR.

It belongs to the UPF0251 family.

In Desulforudis audaxviator (strain MP104C), this protein is UPF0251 protein Daud_0090.